The chain runs to 140 residues: Organic hydroperoxide resistance protein-like (140 aa).

The protein belongs to the OsmC/Ohr family.

The polypeptide is Organic hydroperoxide resistance protein-like (Staphylococcus aureus (strain MRSA252)).